Here is a 445-residue protein sequence, read N- to C-terminus: Phosphoglucosamine mutase (445 aa).

Ser102 (phosphoserine intermediate) is an active-site residue. Positions 102, 241, 243, and 245 each coordinate Mg(2+). Ser102 is modified (phosphoserine).

Belongs to the phosphohexose mutase family. The cofactor is Mg(2+). Activated by phosphorylation.

The enzyme catalyses alpha-D-glucosamine 1-phosphate = D-glucosamine 6-phosphate. Catalyzes the conversion of glucosamine-6-phosphate to glucosamine-1-phosphate. The chain is Phosphoglucosamine mutase from Escherichia fergusonii (strain ATCC 35469 / DSM 13698 / CCUG 18766 / IAM 14443 / JCM 21226 / LMG 7866 / NBRC 102419 / NCTC 12128 / CDC 0568-73).